A 255-amino-acid polypeptide reads, in one-letter code: Phosphate import ATP-binding protein PstB (255 aa).

In terms of domain architecture, ABC transporter spans 10–250 (INIKDLNLWY…PQMKSTEDYI (241 aa)). 42–49 (GPSGCGKS) lines the ATP pocket.

This sequence belongs to the ABC transporter superfamily. Phosphate importer (TC 3.A.1.7) family. As to quaternary structure, the complex is composed of two ATP-binding proteins (PstB), two transmembrane proteins (PstC and PstA) and a solute-binding protein (PstS).

It localises to the cell membrane. It carries out the reaction phosphate(out) + ATP + H2O = ADP + 2 phosphate(in) + H(+). In terms of biological role, part of the ABC transporter complex PstSACB involved in phosphate import. Responsible for energy coupling to the transport system. The chain is Phosphate import ATP-binding protein PstB from Methanococcoides burtonii (strain DSM 6242 / NBRC 107633 / OCM 468 / ACE-M).